The following is a 355-amino-acid chain: Glucose-1-phosphate thymidylyltransferase (355 aa).

Residues Asp107 and Asp220 each contribute to the Mg(2+) site.

The protein belongs to the glucose-1-phosphate thymidylyltransferase family. Requires Mg(2+) as cofactor.

It catalyses the reaction dTTP + alpha-D-glucose 1-phosphate + H(+) = dTDP-alpha-D-glucose + diphosphate. Its pathway is antibiotic biosynthesis; streptomycin biosynthesis. Its function is as follows. Involved in the biosynthesis of the streptose moiety of streptomycin. Catalyzes the formation of dTDP-glucose, from dTTP and glucose 1-phosphate, as well as its pyrophosphorolysis. The protein is Glucose-1-phosphate thymidylyltransferase (strD) of Streptomyces griseus.